The following is a 305-amino-acid chain: Aspartate carbamoyltransferase catalytic subunit (305 aa).

Residues Arg51 and Thr52 each coordinate carbamoyl phosphate. Lys79 contributes to the L-aspartate binding site. Residues Arg101, His130, and Gln133 each coordinate carbamoyl phosphate. Arg163 and Arg215 together coordinate L-aspartate. Carbamoyl phosphate contacts are provided by Gly256 and Pro257.

Belongs to the aspartate/ornithine carbamoyltransferase superfamily. ATCase family. Heterododecamer (2C3:3R2) of six catalytic PyrB chains organized as two trimers (C3), and six regulatory PyrI chains organized as three dimers (R2).

It catalyses the reaction carbamoyl phosphate + L-aspartate = N-carbamoyl-L-aspartate + phosphate + H(+). Its pathway is pyrimidine metabolism; UMP biosynthesis via de novo pathway; (S)-dihydroorotate from bicarbonate: step 2/3. Functionally, catalyzes the condensation of carbamoyl phosphate and aspartate to form carbamoyl aspartate and inorganic phosphate, the committed step in the de novo pyrimidine nucleotide biosynthesis pathway. The sequence is that of Aspartate carbamoyltransferase catalytic subunit from Ehrlichia canis (strain Jake).